A 124-amino-acid polypeptide reads, in one-letter code: Probable cytochrome b5 1 (124 aa).

The Cytochrome b5 heme-binding domain maps to 3–79 (VKYFEPEEIV…LEEMYIGDLK (77 aa)). H38 and H62 together coordinate heme. Residues 100–120 (PPLPLLIALIVLPAIAVIVFV) traverse the membrane as a helical segment.

The protein belongs to the cytochrome b5 family.

The protein localises to the endoplasmic reticulum membrane. Its subcellular location is the microsome membrane. Its function is as follows. Membrane bound hemoprotein which function as an electron carrier for several membrane bound oxygenases. The protein is Probable cytochrome b5 1 of Schizosaccharomyces pombe (strain 972 / ATCC 24843) (Fission yeast).